A 248-amino-acid chain; its full sequence is 4-hydroxy-tetrahydrodipicolinate reductase (248 aa).

NAD(+)-binding positions include 8-13, D34, 76-78, and 103-106; these read GAKGRV, GTT, and APNF. The active-site Proton donor/acceptor is H133. Residue H134 coordinates (S)-2,3,4,5-tetrahydrodipicolinate. The Proton donor role is filled by K137. 143-144 contacts (S)-2,3,4,5-tetrahydrodipicolinate; sequence GT.

Belongs to the DapB family.

It is found in the cytoplasm. The catalysed reaction is (S)-2,3,4,5-tetrahydrodipicolinate + NAD(+) + H2O = (2S,4S)-4-hydroxy-2,3,4,5-tetrahydrodipicolinate + NADH + H(+). The enzyme catalyses (S)-2,3,4,5-tetrahydrodipicolinate + NADP(+) + H2O = (2S,4S)-4-hydroxy-2,3,4,5-tetrahydrodipicolinate + NADPH + H(+). It functions in the pathway amino-acid biosynthesis; L-lysine biosynthesis via DAP pathway; (S)-tetrahydrodipicolinate from L-aspartate: step 4/4. Catalyzes the conversion of 4-hydroxy-tetrahydrodipicolinate (HTPA) to tetrahydrodipicolinate. This Corynebacterium urealyticum (strain ATCC 43042 / DSM 7109) protein is 4-hydroxy-tetrahydrodipicolinate reductase.